The primary structure comprises 408 residues: LL-diaminopimelate aminotransferase (408 aa).

Residues Y15 and G42 each contribute to the substrate site. Pyridoxal 5'-phosphate contacts are provided by residues Y72, 108–109 (SK), Y132, N187, Y218, and 246–248 (SFS). Substrate-binding residues include K109, Y132, and N187. K249 is modified (N6-(pyridoxal phosphate)lysine). Pyridoxal 5'-phosphate contacts are provided by R257 and N292. Positions 292 and 388 each coordinate substrate.

This sequence belongs to the class-I pyridoxal-phosphate-dependent aminotransferase family. LL-diaminopimelate aminotransferase subfamily. Homodimer. Requires pyridoxal 5'-phosphate as cofactor.

It carries out the reaction (2S,6S)-2,6-diaminopimelate + 2-oxoglutarate = (S)-2,3,4,5-tetrahydrodipicolinate + L-glutamate + H2O + H(+). It functions in the pathway amino-acid biosynthesis; L-lysine biosynthesis via DAP pathway; LL-2,6-diaminopimelate from (S)-tetrahydrodipicolinate (aminotransferase route): step 1/1. Functionally, involved in the synthesis of meso-diaminopimelate (m-DAP or DL-DAP), required for both lysine and peptidoglycan biosynthesis. Catalyzes the direct conversion of tetrahydrodipicolinate to LL-diaminopimelate. This chain is LL-diaminopimelate aminotransferase, found in Leptospira interrogans serogroup Icterohaemorrhagiae serovar Lai (strain 56601).